We begin with the raw amino-acid sequence, 503 residues long: Aspartyl/glutamyl-tRNA(Asn/Gln) amidotransferase subunit B (503 aa).

Belongs to the GatB/GatE family. GatB subfamily. As to quaternary structure, heterotrimer of A, B and C subunits.

The catalysed reaction is L-glutamyl-tRNA(Gln) + L-glutamine + ATP + H2O = L-glutaminyl-tRNA(Gln) + L-glutamate + ADP + phosphate + H(+). It carries out the reaction L-aspartyl-tRNA(Asn) + L-glutamine + ATP + H2O = L-asparaginyl-tRNA(Asn) + L-glutamate + ADP + phosphate + 2 H(+). In terms of biological role, allows the formation of correctly charged Asn-tRNA(Asn) or Gln-tRNA(Gln) through the transamidation of misacylated Asp-tRNA(Asn) or Glu-tRNA(Gln) in organisms which lack either or both of asparaginyl-tRNA or glutaminyl-tRNA synthetases. The reaction takes place in the presence of glutamine and ATP through an activated phospho-Asp-tRNA(Asn) or phospho-Glu-tRNA(Gln). The chain is Aspartyl/glutamyl-tRNA(Asn/Gln) amidotransferase subunit B from Ruegeria pomeroyi (strain ATCC 700808 / DSM 15171 / DSS-3) (Silicibacter pomeroyi).